Reading from the N-terminus, the 290-residue chain is Protoheme IX farnesyltransferase (290 aa).

Transmembrane regions (helical) follow at residues 8-28 (LTKPGIIMGNLISVLAGYFLA), 36-56 (LSLLVYTMLGVALVIASGCVV), 81-101 (INIEFAFLFAIIMLLIGTGLL), 108-128 (LSAVMVLLGYVFYVFFYTMWY), 133-153 (VYGTLVGSVSGAIPPLVGYLA), 163-183 (VLLFGLFCLWQMPHSYAIAMF), 209-229 (IMIYVLVFSVVALGLYAFGHT), 230-247 (GYEYLAVVAISCYGWFKV), and 270-290 (LAITAFSTVLGIELLPFSITF).

This sequence belongs to the UbiA prenyltransferase family. Protoheme IX farnesyltransferase subfamily.

It is found in the cell inner membrane. It catalyses the reaction heme b + (2E,6E)-farnesyl diphosphate + H2O = Fe(II)-heme o + diphosphate. Its pathway is porphyrin-containing compound metabolism; heme O biosynthesis; heme O from protoheme: step 1/1. Converts heme B (protoheme IX) to heme O by substitution of the vinyl group on carbon 2 of heme B porphyrin ring with a hydroxyethyl farnesyl side group. In Aliivibrio salmonicida (strain LFI1238) (Vibrio salmonicida (strain LFI1238)), this protein is Protoheme IX farnesyltransferase.